The sequence spans 863 residues: Adenosylcobalamin biosynthesis bifunctional protein CobDQ (863 aa).

Positions methionine 1–isoleucine 373 are putative threonine-phosphate decarboxylase. Residues histidine 6 to glycine 7, asparagine 30, and asparagine 159 each bind O-phospho-L-threonine. The residue at position 214 (lysine 214) is an N6-(pyridoxal phosphate)lysine. O-phospho-L-threonine is bound by residues arginine 323 and arginine 337. A cobyric acid synthase region spans residues methionine 374–glycine 863. In terms of domain architecture, GATase cobBQ-type spans arginine 622–phenylalanine 810. Cysteine 704 acts as the Nucleophile in catalysis. Residue histidine 802 is part of the active site.

It in the N-terminal section; belongs to the class-II pyridoxal-phosphate-dependent aminotransferase family. The protein in the C-terminal section; belongs to the CobB/CobQ family. CobQ subfamily. Requires pyridoxal 5'-phosphate as cofactor.

It catalyses the reaction O-phospho-L-threonine + H(+) = (R)-1-aminopropan-2-yl phosphate + CO2. Its pathway is cofactor biosynthesis; adenosylcobalamin biosynthesis. In terms of biological role, catalyzes two activities which are involved in the adenosylcobalamin biosynthesis: decarboxylates L-threonine-O-3-phosphate to yield (R)-1-amino-2-propanol O-2-phosphate, the precursor for the linkage between the nucleotide loop and the corrin ring in cobalamin, and catalyzes amidations at positions B, D, E, and G on adenosylcobyrinic A,C-diamide. NH(2) groups are provided by glutamine, and one molecule of ATP is hydrogenolyzed for each amidation. This is Adenosylcobalamin biosynthesis bifunctional protein CobDQ (cobDQ) from Leptospira interrogans serogroup Icterohaemorrhagiae serovar Lai (strain 56601).